Consider the following 256-residue polypeptide: GCN5-related N-acetyltransferase 10, chloroplastic (256 aa).

The N-terminal 41 residues, 1 to 41, are a transit peptide targeting the chloroplast; sequence MGHLPQSLYSAAGPKFPYPGSSGLGVDQRKLTWSRFPVFLR. One can recognise an N-acetyltransferase domain in the interval 106 to 256; that stretch reads FMFFQAEVLS…RRVLMSKRFS (151 aa). Acetyl-CoA is bound by residues 178 to 180, 186 to 191, 217 to 219, and Tyr-224; these read LAV, RKKMAS, and DAA. The active-site Proton donor is the Tyr-224.

Belongs to the acetyltransferase family. GNAT subfamily. Oligomer. In terms of processing, autoacetylated. As to expression, expressed in green tissues.

It is found in the plastid. The protein localises to the chloroplast. It catalyses the reaction an N-terminal L-alpha-aminoacyl-[protein] + acetyl-CoA = N-terminal N(alpha)-acetyl-L-alpha-aminoacyl-[protein] + CoA + H(+). It carries out the reaction L-lysyl-[protein] + acetyl-CoA = N(6)-acetyl-L-lysyl-[protein] + CoA + H(+). The catalysed reaction is N-terminal L-methionyl-[protein] + acetyl-CoA = N-terminal N(alpha)-acetyl-L-methionyl-[protein] + CoA + H(+). The enzyme catalyses N-terminal L-seryl-[protein] + acetyl-CoA = N-terminal N(alpha)-acetyl-L-seryl-[protein] + CoA + H(+). It catalyses the reaction N-terminal L-valyl-[protein] + acetyl-CoA = N-terminal N(alpha)-acetyl-L-valyl-[protein] + CoA + H(+). It carries out the reaction N-terminal L-threonyl-[protein] + acetyl-CoA = N-terminal N(alpha)-acetyl-L-threonyl-[protein] + CoA + H(+). The catalysed reaction is N-terminal L-alanyl-[protein] + acetyl-CoA = N-terminal N(alpha)-acetyl-L-alanyl-[protein] + CoA + H(+). The enzyme catalyses N-terminal glycyl-[protein] + acetyl-CoA = N-terminal N(alpha)-acetylglycyl-[protein] + CoA + H(+). Its function is as follows. Protein acetyltransferase with dual specificity triggering both N-alpha-acetylation (NTA), with a preference for leucine, methionine, serine, valine and to a lower extent threonine and alanine as substrates (can also use glycine), and epsilon-lysine acetylation (KA) of several plastid proteins. The protein is GCN5-related N-acetyltransferase 10, chloroplastic of Arabidopsis thaliana (Mouse-ear cress).